Here is a 79-residue protein sequence, read N- to C-terminus: Cytochrome c oxidase subunit 7A1, mitochondrial (79 aa).

The N-terminal 21 residues, 1 to 21, are a transit peptide targeting the mitochondrion; it reads MQALRVSQALIRSFSSTARNR. Residues 22 to 46 are Mitochondrial matrix-facing; it reads FQNRVREKQKLFQEDNDIPLYLKGG. A helical transmembrane segment spans residues 47–75; the sequence is IVDNILYRVTMTLCLGGTVYSLYSLGWAS. The Mitochondrial intermembrane portion of the chain corresponds to 76-79; that stretch reads FPRN.

Belongs to the cytochrome c oxidase VIIa family. As to quaternary structure, component of the complex IV (CIV, cytochrome c oxidase), a multisubunit enzyme composed of 14 subunits. The complex is composed of a catalytic core of 3 subunits MT-CO1, MT-CO2 and MT-CO3, encoded in the mitochondrial DNA, and 11 supernumerary subunits COX4I1 (or COX4I2), COX5A, COX5B, COX6A2 (or COX6A1), COX6B1 (or COX6B2), COX6C, COX7A1 (or COX7A2), COX7B, COX7C, COX8B and NDUFA4, which are encoded in the nuclear genome. The complex exists as a monomer or a dimer and forms supercomplexes (SCs) in the inner mitochondrial membrane with NADH-ubiquinone oxidoreductase (complex I, CI) and ubiquinol-cytochrome c oxidoreductase (cytochrome b-c1 complex, complex III, CIII), resulting in different assemblies (supercomplex SCI(1)III(2)IV(1) and megacomplex MCI(2)III(2)IV(2)).

It is found in the mitochondrion inner membrane. The protein operates within energy metabolism; oxidative phosphorylation. In terms of biological role, component of the mitochondrial respiratory complex IV (CIV, also named cytochrome c oxidase complex), the last enzyme in the mitochondrial electron transport chain which drives oxidative phosphorylation. The CIV complex is the component of the respiratory chain that catalyzes the reduction of oxygen to water. Acts as an assembly factor that specifically drives the homodimerization of CIV complexes, mediating the formation of mitochondrial respiratory supercomplexes (respirasomes) containing two CIV: supercomplxes with two molecules of CIV show improved activity. Despite being highly expressed in brown adipose tissue, not required for thermogenesis. The protein is Cytochrome c oxidase subunit 7A1, mitochondrial (COX7A1) of Homo sapiens (Human).